We begin with the raw amino-acid sequence, 45 residues long: Large ribosomal subunit protein bL36 (45 aa).

Residues 1–45 are disordered; sequence MRVSSSIKADPSKGDKLVRRKGRLYVINKKDPNRKQRQAGPARKK.

The protein belongs to the bacterial ribosomal protein bL36 family.

The sequence is that of Large ribosomal subunit protein bL36 from Chlamydia trachomatis serovar L2 (strain ATCC VR-902B / DSM 19102 / 434/Bu).